Consider the following 487-residue polypeptide: Serine/threonine-protein kinase 4 (487 aa).

Position 1 is an N-acetylmethionine (Met1). Residue Thr3 is modified to Phosphothreonine. The region spanning 30-281 (FDVLEKLGEG…ATQLLQHPFV (252 aa)) is the Protein kinase domain. Residues 36–44 (LGEGSYGSV) and Lys59 each bind ATP. Residue Asp149 is the Proton acceptor of the active site. Thr183 is subject to Phosphothreonine; by autocatalysis. Position 265 is a phosphoserine (Ser265). The stretch at 290–310 (LRDLINEAMDVKLKRQESQQR) forms a coiled coil. The segment covering 303–312 (KRQESQQREV) has biased composition (basic and acidic residues). The disordered stretch occupies residues 303–332 (KRQESQQREVDQDDEENSEEDEMDSGTMVR). Over residues 313-326 (DQDDEENSEEDEMD) the composition is skewed to acidic residues. Ser320 carries the phosphoserine modification. A phosphothreonine mark is found at Thr340 and Thr367. Thr387 is modified (phosphothreonine; by PKB/AKT1). Ser410 and Ser414 each carry phosphoserine. Tyr433 is subject to Phosphotyrosine. Residues 433–480 (YEFLKSWTVEDLQKRLLALDPMMEQEIEEIRQKYQSKRQPILDAIEAK) enclose the SARAH domain.

It belongs to the protein kinase superfamily. STE Ser/Thr protein kinase family. STE20 subfamily. As to quaternary structure, homodimer; mediated via the coiled-coil region. Interacts with NORE1, which inhibits autoactivation. Interacts with and stabilizes SAV1. Interacts with RASSF1. Interacts with FOXO3. Interacts with RASSF2 (via SARAH domain). Interacts with AR, PKB/AKT1, TNNI3 and SIRT1. Interacts with DLG5 (via PDZ domain 3). Interacts with MARK3 and SCRIB in the presence of DLG5. It depends on Mg(2+) as a cofactor. Post-translationally, autophosphorylated on serine and threonine residues. Phosphorylation at Thr-387 by PKB/AKT1, leads to inhibition of its: kinase activity, nuclear translocation and autophosphorylation at Thr-183. It also diminishes its cleavage by caspases and its ability to phosphorylate FOXO3. In terms of processing, proteolytically cleaved by caspase-3 during apoptosis at Asp-326 and Asp-349 resulting in a 37 kDa or a 39 kDa subunit respectively. The 39 kDa subunit is further cleaved into the 37 kDa form. Proteolytic cleavage results in kinase activation and nuclear translocation of the truncated form (MST1/N). It is less likely that cleavage at Asp-349 is a prerequisite for activation as this site is not conserved in the murine ortholog.

Its subcellular location is the cytoplasm. The protein localises to the nucleus. It carries out the reaction L-seryl-[protein] + ATP = O-phospho-L-seryl-[protein] + ADP + H(+). The catalysed reaction is L-threonyl-[protein] + ATP = O-phospho-L-threonyl-[protein] + ADP + H(+). Inhibited by the C-terminal non-catalytic region. Activated by caspase-cleavage. Full activation also requires homodimerization and autophosphorylation of Thr-183. Activated by RASSF1 which acts by preventing its dephosphorylation. In terms of biological role, stress-activated, pro-apoptotic kinase which, following caspase-cleavage, enters the nucleus and induces chromatin condensation followed by internucleosomal DNA fragmentation. Key component of the Hippo signaling pathway which plays a pivotal role in organ size control and tumor suppression by restricting proliferation and promoting apoptosis. The core of this pathway is composed of a kinase cascade wherein STK3/MST2 and STK4/MST1, in complex with its regulatory protein SAV1, phosphorylates and activates LATS1/2 in complex with its regulatory protein MOB1, which in turn phosphorylates and inactivates YAP1 oncoprotein and WWTR1/TAZ. Phosphorylation of YAP1 by LATS2 inhibits its translocation into the nucleus to regulate cellular genes important for cell proliferation, cell death, and cell migration. STK3/MST2 and STK4/MST1 are required to repress proliferation of mature hepatocytes, to prevent activation of facultative adult liver stem cells (oval cells), and to inhibit tumor formation. Phosphorylates 'Ser-14' of histone H2B (H2BS14ph) during apoptosis. Phosphorylates FOXO3 upon oxidative stress, which results in its nuclear translocation and cell death initiation. Phosphorylates MOBKL1A, MOBKL1B and RASSF2. Phosphorylates TNNI3 (cardiac Tn-I) and alters its binding affinity to TNNC1 (cardiac Tn-C) and TNNT2 (cardiac Tn-T). Phosphorylates FOXO1 on 'Ser-212' and regulates its activation and stimulates transcription of PMAIP1 in a FOXO1-dependent manner. Phosphorylates SIRT1 and inhibits SIRT1-mediated p53/TP53 deacetylation, thereby promoting p53/TP53 dependent transcription and apoptosis upon DNA damage. Acts as an inhibitor of PKB/AKT1. Phosphorylates AR on 'Ser-650' and suppresses its activity by intersecting with PKB/AKT1 signaling and antagonizing formation of AR-chromatin complexes. The chain is Serine/threonine-protein kinase 4 (STK4) from Aotus nancymaae (Ma's night monkey).